A 527-amino-acid chain; its full sequence is 2-isopropylmalate synthase (527 aa).

The region spanning 18 to 280 is the Pyruvate carboxyltransferase domain; sequence IRIFDTTLRD…QTNINSKRLV (263 aa). Mn(2+)-binding residues include Asp-27, His-215, His-217, and Asn-251. Residues 405-527 form a regulatory domain region; sequence TLVDYEVTSG…ASDPGELPQP (123 aa).

It belongs to the alpha-IPM synthase/homocitrate synthase family. LeuA type 1 subfamily. In terms of assembly, homodimer. It depends on Mn(2+) as a cofactor.

It localises to the cytoplasm. The enzyme catalyses 3-methyl-2-oxobutanoate + acetyl-CoA + H2O = (2S)-2-isopropylmalate + CoA + H(+). It functions in the pathway amino-acid biosynthesis; L-leucine biosynthesis; L-leucine from 3-methyl-2-oxobutanoate: step 1/4. Its function is as follows. Catalyzes the condensation of the acetyl group of acetyl-CoA with 3-methyl-2-oxobutanoate (2-ketoisovalerate) to form 3-carboxy-3-hydroxy-4-methylpentanoate (2-isopropylmalate). The polypeptide is 2-isopropylmalate synthase (Rhodopirellula baltica (strain DSM 10527 / NCIMB 13988 / SH1)).